We begin with the raw amino-acid sequence, 310 residues long: Vomeronasal type-1 receptor 44 (310 aa).

The Extracellular portion of the chain corresponds to 1-20; the sequence is MNKANLLHIDTNIKITLLAE. A helical transmembrane segment spans residues 21–41; that stretch reads VSVGISANSILFIAYLCMLLG. Topologically, residues 42-50 are cytoplasmic; it reads ENRHKPIDL. Residues 51–71 form a helical membrane-spanning segment; sequence YIAFLSLTQLMLLITMGLIAV. At 72 to 93 the chain is on the extracellular side; it reads DMFMPWGRWDSTTCQSLIYLHR. The cysteines at positions 85 and 172 are disulfide-linked. A helical membrane pass occupies residues 94–114; sequence FLRGLTLCATCLLNVLWTITL. Residues 115 to 131 are Cytoplasmic-facing; that stretch reads SSRNSCLAKFKHKYPHH. A helical membrane pass occupies residues 132–152; that stretch reads ISGAFLFLCVLYMSFSSHFLV. Over 153–190 the chain is Extracellular; sequence SMTVTPNLTSENFMYVTQSCSLLPMSYSRTSMFSTPVA. Asn159 carries an N-linked (GlcNAc...) asparagine glycan. The helical transmembrane segment at 191–211 threads the bilayer; sequence IRETFLISLMALSSGYMVALL. At 212 to 238 the chain is on the cytoplasmic side; the sequence is WRHKKQAQHLRSTSLSSKASPEQRATR. The helical transmembrane segment at 239 to 259 threads the bilayer; sequence TILLLMSFFVVFYILDTVIFH. Topologically, residues 260–268 are extracellular; that stretch reads SRMKFKDGS. A helical transmembrane segment spans residues 269 to 289; the sequence is ILYCFQIIVSHSYVTVSPFVF. Residues 290–310 lie on the Cytoplasmic side of the membrane; the sequence is ICTEKHIIKFLRSMCGRIANI.

The protein belongs to the G-protein coupled receptor 1 family.

It localises to the cell membrane. In terms of biological role, putative pheromone receptor implicated in the regulation of social and reproductive behavior. The protein is Vomeronasal type-1 receptor 44 (Vmn1r44) of Mus musculus (Mouse).